We begin with the raw amino-acid sequence, 403 residues long: MSEVNRESLEAILPQLKCHFTWNLFREGSMSSHMEDRVCNQVEHLNSEEKATMYDLLAYIKHLDGESKAALECLGQAEDLRKSEHNDQSEIRRLVTWGNYAWIYYHMGRLSEAQAYVDKVRQVCQKFANPYSMECPELECEEGWTRLKCGRNERAKMCFEKALEEKPKDPECSSGMAIAMFRLEEKPEKQFSVDALKQAMELNPQNQYLKVLLALKLLRMGEEAEGERLIKDALGKAPNQTDVLQKAAQFYKKKGNLDRAIELLGKALRSTVNNSPLYSLVMCRYREILEQLQNKGDADSSERRQRMAELRRLTMEFMQKTLQRRRSPLNSYSDLIDFPEVERCYQMVISKESPDVEEEDLYERYCNLQEYHRKSEDLAALECLLQFPRNERSIEKEEVKEQT.

4 TPR repeats span residues 94 to 127 (LVTW…CQKF), 136 to 169 (PELE…KPKD), 172 to 206 (CSSG…NPQN), and 241 to 274 (TDVL…TVNN).

Belongs to the IFIT family. In terms of assembly, component of an interferon-dependent multiprotein complex, at least composed of IFIT1, IFIT2 and IFIT3. Interacts with IFIT1 and IFIT2. Interacts (via N-terminus) with MAVS, TBK1, TRAF6 and RIGI. Interacts with COPS5.

It is found in the cytoplasm. It localises to the mitochondrion. Its function is as follows. IFN-induced antiviral protein which acts as an inhibitor of cellular as well as viral processes, cell migration, proliferation, signaling, and viral replication. Enhances MAVS-mediated host antiviral responses by serving as an adapter bridging TBK1 to MAVS which leads to the activation of TBK1 and phosphorylation of IRF3 and phosphorylated IRF3 translocates into nucleus to promote antiviral gene transcription. Exhibits an antiproliferative activity via the up-regulation of cell cycle negative regulators CDKN1A/p21 and CDKN1B/p27. Normally, CDKN1B/p27 turnover is regulated by COPS5, which binds CDKN1B/p27 in the nucleus and exports it to the cytoplasm for ubiquitin-dependent degradation. IFIT3 sequesters COPS5 in the cytoplasm, thereby increasing nuclear CDKN1B/p27 protein levels. Up-regulates CDKN1A/p21 by down-regulating MYC, a repressor of CDKN1A/p21. Can negatively regulate the apoptotic effects of IFIT2. This chain is Interferon-induced protein with tetratricopeptide repeats 3 (Ifit3), found in Mus musculus (Mouse).